The following is a 135-amino-acid chain: uncharacterized protein (135 aa).

A helical membrane pass occupies residues 35–55 (VVLVLIGATIILVVISVLVVS).

The protein localises to the membrane. This is an uncharacterized protein from Saccharomyces cerevisiae (strain ATCC 204508 / S288c) (Baker's yeast).